The primary structure comprises 82 residues: MVFLLCFFLVADVSYGINGDCELPKVVGPCRASHPRYYYNSSSKRCEKFIYGGCRGNANNFHTLEECEKVCGVRSRDSPKEN.

The N-terminal stretch at 1–16 (MVFLLCFFLVADVSYG) is a signal peptide. Residues 21-71 (CELPKVVGPCRASHPRYYYNSSSKRCEKFIYGGCRGNANNFHTLEECEKVC) form the BPTI/Kunitz inhibitor domain. 3 disulfide bridges follow: C21/C71, C30/C54, and C46/C67. A propeptide spanning residues 76–82 (RDSPKEN) is cleaved from the precursor.

It belongs to the venom Kunitz-type family. Sea anemone type 2 potassium channel toxin subfamily.

Its subcellular location is the secreted. The protein resides in the nematocyst. Functionally, serine protease inhibitor that inhibits both tissue and plasma kallikreins. Has hemolytic activity. Inhibits voltage-gated potassium channels (Kv). The protein is U-actitoxin-Avd3j of Anemonia viridis (Snakelocks anemone).